Here is a 73-residue protein sequence, read N- to C-terminus: Translation initiation factor IF-1 (73 aa).

Residues Met1–Lys73 enclose the S1-like domain.

It belongs to the IF-1 family. Component of the 30S ribosomal translation pre-initiation complex which assembles on the 30S ribosome in the order IF-2 and IF-3, IF-1 and N-formylmethionyl-tRNA(fMet); mRNA recruitment can occur at any time during PIC assembly.

Its subcellular location is the cytoplasm. Functionally, one of the essential components for the initiation of protein synthesis. Stabilizes the binding of IF-2 and IF-3 on the 30S subunit to which N-formylmethionyl-tRNA(fMet) subsequently binds. Helps modulate mRNA selection, yielding the 30S pre-initiation complex (PIC). Upon addition of the 50S ribosomal subunit IF-1, IF-2 and IF-3 are released leaving the mature 70S translation initiation complex. The protein is Translation initiation factor IF-1 of Kineococcus radiotolerans (strain ATCC BAA-149 / DSM 14245 / SRS30216).